The chain runs to 601 residues: MNERQKFTRNFSIIAHVDHGKSTLADRLLEIGLVTDKRTQKNQILDSMDIERERGITIKANNASFDYHAKDGNIYHLNLIDTPGHVDFTYEVSRSLAACEGVLLIVDASQGVEAQTLANLYLAMDLDLRIIPVINKIDLPSADIDKCKLMIEESLGLNPEEAIPISAKTGLNVQEVLEAICYLLPPPVGDVDAPLKALIYDSFFDTYMGVVAKVRLYDGRLKKGEMIHMMNIGRQFTVTEVGINRLSMVACEELQAGDVGYVVAGMKKMGDAKTGDTITHANRQTAEDVKGFKDAKPMVFAGLFPINGEDFDALVDAIEKLKLNDSALTFERENSAALGFGFRVGYLGLLHMEIVQERLEREFNLALITTAPSVKFRITTTKDEVIEVDNPSKWPDPILIGKSEEPFVKATIIAPESYVGNIMSLVIEKRGIHLDTVYLSKDKLQLTYELPLAELIFEFYDKLKSYTKGYASLDYEEVGYRDSKLVRMDILVNGEPVDALSSIVHKTKAEERGRVIIEKLKDLIPRHQFMIPLQAAIGSKVVARESISALRKNVTAKCYGGDISRKKKLLEKQKEGKKRMKQIGNVEIPQEAFLSILKTGD.

Positions Lys-6 to Val-188 constitute a tr-type G domain. Residues Asp-18 to Thr-23 and Asn-135 to Asp-138 contribute to the GTP site.

Belongs to the TRAFAC class translation factor GTPase superfamily. Classic translation factor GTPase family. LepA subfamily.

The protein resides in the cell inner membrane. The enzyme catalyses GTP + H2O = GDP + phosphate + H(+). Its function is as follows. Required for accurate and efficient protein synthesis under certain stress conditions. May act as a fidelity factor of the translation reaction, by catalyzing a one-codon backward translocation of tRNAs on improperly translocated ribosomes. Back-translocation proceeds from a post-translocation (POST) complex to a pre-translocation (PRE) complex, thus giving elongation factor G a second chance to translocate the tRNAs correctly. Binds to ribosomes in a GTP-dependent manner. This is Elongation factor 4 from Leptospira biflexa serovar Patoc (strain Patoc 1 / Ames).